The chain runs to 739 residues: Phosphoribosylformylglycinamidine synthase subunit PurL (739 aa).

The active site involves His-54. 2 residues coordinate ATP: Tyr-57 and Lys-96. Position 98 (Glu-98) interacts with Mg(2+). Substrate-binding positions include 99–102 (SHNH) and Arg-121. His-100 functions as the Proton acceptor in the catalytic mechanism. Asp-122 lines the Mg(2+) pocket. Gln-245 lines the substrate pocket. Position 273 (Asp-273) interacts with Mg(2+). Position 317 to 319 (317 to 319 (ESQ)) interacts with substrate. Asp-500 and Gly-537 together coordinate ATP. Asn-538 contacts Mg(2+). Substrate is bound at residue Ser-540.

It belongs to the FGAMS family. As to quaternary structure, monomer. Part of the FGAM synthase complex composed of 1 PurL, 1 PurQ and 2 PurS subunits.

Its subcellular location is the cytoplasm. It catalyses the reaction N(2)-formyl-N(1)-(5-phospho-beta-D-ribosyl)glycinamide + L-glutamine + ATP + H2O = 2-formamido-N(1)-(5-O-phospho-beta-D-ribosyl)acetamidine + L-glutamate + ADP + phosphate + H(+). It participates in purine metabolism; IMP biosynthesis via de novo pathway; 5-amino-1-(5-phospho-D-ribosyl)imidazole from N(2)-formyl-N(1)-(5-phospho-D-ribosyl)glycinamide: step 1/2. In terms of biological role, part of the phosphoribosylformylglycinamidine synthase complex involved in the purines biosynthetic pathway. Catalyzes the ATP-dependent conversion of formylglycinamide ribonucleotide (FGAR) and glutamine to yield formylglycinamidine ribonucleotide (FGAM) and glutamate. The FGAM synthase complex is composed of three subunits. PurQ produces an ammonia molecule by converting glutamine to glutamate. PurL transfers the ammonia molecule to FGAR to form FGAM in an ATP-dependent manner. PurS interacts with PurQ and PurL and is thought to assist in the transfer of the ammonia molecule from PurQ to PurL. This Bacillus cereus (strain ATCC 10987 / NRS 248) protein is Phosphoribosylformylglycinamidine synthase subunit PurL.